Here is a 463-residue protein sequence, read N- to C-terminus: Asparagine--tRNA ligase (463 aa).

This sequence belongs to the class-II aminoacyl-tRNA synthetase family. Homodimer.

The protein localises to the cytoplasm. The catalysed reaction is tRNA(Asn) + L-asparagine + ATP = L-asparaginyl-tRNA(Asn) + AMP + diphosphate + H(+). The protein is Asparagine--tRNA ligase of Nostoc sp. (strain PCC 7120 / SAG 25.82 / UTEX 2576).